We begin with the raw amino-acid sequence, 839 residues long: LPS-assembly protein LptD (839 aa).

A signal peptide spans 1–21 (MAIGITACVLSLINYQGLAYS).

It belongs to the LptD family. In terms of assembly, component of the lipopolysaccharide transport and assembly complex. Interacts with LptE and LptA.

It localises to the cell outer membrane. Together with LptE, is involved in the assembly of lipopolysaccharide (LPS) at the surface of the outer membrane. In Legionella pneumophila subsp. pneumophila (strain Philadelphia 1 / ATCC 33152 / DSM 7513), this protein is LPS-assembly protein LptD.